We begin with the raw amino-acid sequence, 367 residues long: uncharacterized protein (367 aa).

Positions 333–367 (RERRPTLNAQRAHAAAQQQPRRRNRRQQGTGASAS) are disordered. Positions 341–351 (AQRAHAAAQQQ) are enriched in low complexity.

This is an uncharacterized protein from Amazona oratrix (yellow-headed parrot).